Here is a 103-residue protein sequence, read N- to C-terminus: Acylphosphatase-2 (103 aa).

Residues serine 13–tyrosine 103 form the Acylphosphatase-like domain. Catalysis depends on residues arginine 28 and asparagine 46.

The protein belongs to the acylphosphatase family.

It catalyses the reaction an acyl phosphate + H2O = a carboxylate + phosphate + H(+). The polypeptide is Acylphosphatase-2 (acyp2) (Xenopus tropicalis (Western clawed frog)).